Consider the following 177-residue polypeptide: MAELATVARPYAEALYQVARQGDVAVWVEQVSALAQVAENAELRQFAGSPKVSAEQVYDVVAAAAGVSLSTGVQHFLRTVIDNGRLAVLPAIAVQFNALVNAASGVADAAIFSAYPIEPAQLAEVVAALEQRFGRKLSVNVTLEPELIGGIRVVVGDEVLDTSVKARLERMKVALSA.

Belongs to the ATPase delta chain family. F-type ATPases have 2 components, F(1) - the catalytic core - and F(0) - the membrane proton channel. F(1) has five subunits: alpha(3), beta(3), gamma(1), delta(1), epsilon(1). F(0) has three main subunits: a(1), b(2) and c(10-14). The alpha and beta chains form an alternating ring which encloses part of the gamma chain. F(1) is attached to F(0) by a central stalk formed by the gamma and epsilon chains, while a peripheral stalk is formed by the delta and b chains.

It is found in the cell inner membrane. Functionally, f(1)F(0) ATP synthase produces ATP from ADP in the presence of a proton or sodium gradient. F-type ATPases consist of two structural domains, F(1) containing the extramembraneous catalytic core and F(0) containing the membrane proton channel, linked together by a central stalk and a peripheral stalk. During catalysis, ATP synthesis in the catalytic domain of F(1) is coupled via a rotary mechanism of the central stalk subunits to proton translocation. In terms of biological role, this protein is part of the stalk that links CF(0) to CF(1). It either transmits conformational changes from CF(0) to CF(1) or is implicated in proton conduction. The sequence is that of ATP synthase subunit delta from Leptothrix cholodnii (strain ATCC 51168 / LMG 8142 / SP-6) (Leptothrix discophora (strain SP-6)).